The sequence spans 113 residues: Transcriptional activator RamA (113 aa).

In terms of domain architecture, HTH araC/xylS-type spans 9-107 (DTIVEWIDDN…HQPPGAYRKE (99 aa)). 2 DNA-binding regions (H-T-H motif) span residues 26-47 (EDIARHAGYSKWHLQRLFLQYK) and 74-97 (VYEICLRYGFESQQTFTRIFTRTF).

In terms of biological role, probable transcriptional activator. This is Transcriptional activator RamA (ramA) from Enterobacter cloacae.